The chain runs to 275 residues: Cis-toluene dihydrodiol dehydrogenase (275 aa).

9 to 33 (LVTGGGAGLGRAIVDRYVAEGARVA) serves as a coordination point for NAD(+). Ser142 lines the substrate pocket. Tyr155 acts as the Proton acceptor in catalysis.

It belongs to the short-chain dehydrogenases/reductases (SDR) family.

It catalyses the reaction (1S,2R)-3-methylcyclohexa-3,5-diene-1,2-diol + NAD(+) = 3-methylcatechol + NADH + H(+). The protein operates within xenobiotic degradation; toluene degradation. The chain is Cis-toluene dihydrodiol dehydrogenase (todD) from Pseudomonas putida (strain ATCC 700007 / DSM 6899 / JCM 31910 / BCRC 17059 / LMG 24140 / F1).